The chain runs to 234 residues: Sperm flagellar protein 1 (234 aa).

The Calponin-homology (CH) domain maps to 7-112; sequence EEALHQLYLW…VLIPLRQRLE (106 aa). Residues 181-234 form an essential for homodimerization and microtubule bundling activity region; sequence VLQIAEKEQELLASQETVQVLQMKVKRLEHLLQLKNVRIDDLSRRLQQAERKQR.

As to quaternary structure, homodimer. Interacts with actin, TJP1, CGN and CDH1. As to expression, expressed predominantly in the seminiferous epithelium of adult testis. Expressed in pillar cells of the organ of Corti (at protein level). Expressed in brain, kidney, lung and testis. Highly expressed in the trachea, lung and oviduct.

Its subcellular location is the cytoplasm. The protein resides in the cell projection. The protein localises to the cilium. It is found in the flagellum. It localises to the cytoskeleton. Its subcellular location is the cilium axoneme. The protein resides in the apical cell membrane. The protein localises to the basolateral cell membrane. It is found in the stress fiber. It localises to the microvillus. Its subcellular location is the lamellipodium. The protein resides in the filopodium. Microtubule-associated protein that promotes microtubule bundling and stabilizes microtubules against depolymerization in response to cold shock. Microtubule-associated protein involved in the stabilization of microtubules along the axis of migration during radial intercalation. Promotes the establishment and stabilization of an axis of microtubules required for the active migration of cells into the outer epithelium. Essential for ciliary central apparatus formation which requires both its microtubule-binding and bundling activities and for ciliary localization of HYDIN and SPAG6 in ependymal cilia. Binds actin in intestinal epithelial cells (IECs), essential for IECs survival and contributes to formation of filopodia and lamellipodia in migrating IECs. Regulates planar cell polarity signaling pathway and asymmetric microtubule accumulation in ciliated epithelia. The protein is Sperm flagellar protein 1 (Spef1) of Mus musculus (Mouse).